We begin with the raw amino-acid sequence, 185 residues long: Sulfopyruvate decarboxylase subunit beta (185 aa).

The protein belongs to the TPP enzyme family. In terms of assembly, heterododecamer composed of 6 subunits alpha and 6 subunits beta. Requires thiamine diphosphate as cofactor.

It catalyses the reaction 3-sulfopyruvate + H(+) = sulfoacetaldehyde + CO2. Its pathway is cofactor biosynthesis; coenzyme M biosynthesis; sulfoacetaldehyde from phosphoenolpyruvate and sulfite: step 4/4. Involved in the biosynthesis of the coenzyme M (2-mercaptoethanesulfonic acid). Catalyzes the decarboxylation of sulfopyruvate to sulfoacetaldehyde. The chain is Sulfopyruvate decarboxylase subunit beta from Methanothermobacter thermautotrophicus (strain ATCC 29096 / DSM 1053 / JCM 10044 / NBRC 100330 / Delta H) (Methanobacterium thermoautotrophicum).